The sequence spans 129 residues: Glycine cleavage system H protein (129 aa).

Residues 24–106 (AVRIGLSAYA…HGEGWLLVIQ (83 aa)) enclose the Lipoyl-binding domain. At Lys65 the chain carries N6-lipoyllysine.

This sequence belongs to the GcvH family. The glycine cleavage system is composed of four proteins: P, T, L and H. (R)-lipoate is required as a cofactor.

Functionally, the glycine cleavage system catalyzes the degradation of glycine. The H protein shuttles the methylamine group of glycine from the P protein to the T protein. This Synechococcus sp. (strain WH7803) protein is Glycine cleavage system H protein.